A 193-amino-acid chain; its full sequence is MRPARRFLAALACVAGALLSACATPTPRAERAVLREVSAQFFLGGRMSASDGNQGASGRIEWQHDTAGDEVTVYSPLGQIAARLISSPTGAELLTSDGQRYQAENAEALMPRVFGFGVPVSRLAHWVQAAPPPGAEVRELDAAGRPALVIDQGWRVDYLEYPDTRARTLPTRVEVSRGDARIRLIIDQWELLQ.

The signal sequence occupies residues M1 to A21. Residue C22 is the site of N-palmitoyl cysteine attachment. C22 carries the S-diacylglycerol cysteine lipid modification.

The protein belongs to the LolB family. Monomer.

Its subcellular location is the cell outer membrane. Its function is as follows. Plays a critical role in the incorporation of lipoproteins in the outer membrane after they are released by the LolA protein. The sequence is that of Outer-membrane lipoprotein LolB from Azoarcus sp. (strain BH72).